The following is a 298-amino-acid chain: Octopine catabolism/uptake operon regulatory protein OccR (298 aa).

An HTH lysR-type domain is found at Met1–Thr58. The H-T-H motif DNA-binding region spans Met18 to Lys37.

This sequence belongs to the LysR transcriptional regulatory family.

Positive regulatory protein for the occ operon involved in octopine catabolism and uptake. Also acts as a negative regulator of its expression. In Agrobacterium tumefaciens (strain Ach5), this protein is Octopine catabolism/uptake operon regulatory protein OccR (occR).